Reading from the N-terminus, the 224-residue chain is Viral late gene transcription factor 3 (224 aa).

It belongs to the orthopoxvirus VLTF-3/OPG127 family. In terms of assembly, interacts with the late transcription elongation factor VLTF-4/OPG110. Interacts with the late transcription factors VLTF-1/OPG093.

Acts with RNA polymerase to initiate transcription from late gene promoters. This is Viral late gene transcription factor 3 (OPG127) from Monkeypox virus.